Here is a 518-residue protein sequence, read N- to C-terminus: Golgi-associated olfactory signaling regulator (518 aa).

Residues 1–19 form the signal peptide; that stretch reads MKSFSRILFLVFLLAGLRS. Topologically, residues 20 to 409 are extracellular; it reads KAAPSAPLPL…GRPRGAAGGA (390 aa). The interval 38–377 is disordered; the sequence is HPSETSPLKG…ATLRAPQRHS (340 aa). Residues 92-106 show a composition bias toward basic and acidic residues; sequence DLRETPHPESPETPK. N-linked (GlcNAc...) asparagine glycosylation is present at N124. Positions 138–153 are enriched in pro residues; the sequence is TPGPTEMPHPGSPETP. The N-linked (GlcNAc...) asparagine glycan is linked to N156. Polar residues-rich tracts occupy residues 168 to 180 and 187 to 207; these read TPNTDLMQTTPQE and LNATEVSQAELPETSNTNPTK. N188 and N220 each carry an N-linked (GlcNAc...) asparagine glycan. Basic and acidic residues-rich tracts occupy residues 209-220 and 236-247; these read PDPKSPEKHDLN and DPSKTPHPESHV. Composition is skewed to polar residues over residues 248 to 270 and 276 to 285; these read THNPSPTEISQTEFPTTYYQNAT and SDPQISTSLY. N268 carries N-linked (GlcNAc...) asparagine glycosylation. A helical transmembrane segment spans residues 410–430; that stretch reads LCLFFAGTALLIGIFVLLWCL. Over 431–518 the chain is Cytoplasmic; that stretch reads YRRAARQRPF…SPATLPNNFV (88 aa). The tract at residues 477 to 518 is disordered; the sequence is HIATKQPPPTPPLPPKLPPPPRGGRPQRLEALSPATLPNNFV. A compositionally biased stretch (pro residues) spans 482–499; the sequence is QPPPTPPLPPKLPPPPRG.

Its subcellular location is the golgi apparatus membrane. Functionally, required for proper function of the olfactory system. May be involved in establishing the acuity of olfactory sensory signaling. This chain is Golgi-associated olfactory signaling regulator (GFY), found in Homo sapiens (Human).